A 353-amino-acid chain; its full sequence is Photosystem II D2 protein (353 aa).

Position 2 is an N-acetylthreonine (Thr-2). Thr-2 carries the post-translational modification Phosphothreonine. The chain crosses the membrane as a helical span at residues 41 to 61 (CAYFALGGWFTGTTFVTSWYT). His-118 provides a ligand contact to chlorophyll a. A helical transmembrane segment spans residues 125-141 (GFMLRQFELARSVQLRP). Pheophytin a-binding residues include Gln-130 and Asn-143. Residues 153-166 (VFVSVFLIYPLGQS) form a helical membrane-spanning segment. His-198 lines the chlorophyll a pocket. Residues 208-228 (AALLCAIHGATVENTLFEDGD) form a helical membrane-spanning segment. A plastoquinone-binding residues include His-215 and Phe-262. His-215 is a Fe cation binding site. His-269 is a Fe cation binding site. A helical membrane pass occupies residues 279-295 (GLWMSALGVVGLALNLR).

Belongs to the reaction center PufL/M/PsbA/D family. In terms of assembly, PSII is composed of 1 copy each of membrane proteins PsbA, PsbB, PsbC, PsbD, PsbE, PsbF, PsbH, PsbI, PsbJ, PsbK, PsbL, PsbM, PsbT, PsbX, PsbY, PsbZ, Psb30/Ycf12, at least 3 peripheral proteins of the oxygen-evolving complex and a large number of cofactors. It forms dimeric complexes. The D1/D2 heterodimer binds P680, chlorophylls that are the primary electron donor of PSII, and subsequent electron acceptors. It shares a non-heme iron and each subunit binds pheophytin, quinone, additional chlorophylls, carotenoids and lipids. There is also a Cl(-1) ion associated with D1 and D2, which is required for oxygen evolution. The PSII complex binds additional chlorophylls, carotenoids and specific lipids. serves as cofactor.

It is found in the plastid. The protein resides in the chloroplast thylakoid membrane. It carries out the reaction 2 a plastoquinone + 4 hnu + 2 H2O = 2 a plastoquinol + O2. In terms of biological role, photosystem II (PSII) is a light-driven water:plastoquinone oxidoreductase that uses light energy to abstract electrons from H(2)O, generating O(2) and a proton gradient subsequently used for ATP formation. It consists of a core antenna complex that captures photons, and an electron transfer chain that converts photonic excitation into a charge separation. The D1/D2 (PsbA/PsbD) reaction center heterodimer binds P680, the primary electron donor of PSII as well as several subsequent electron acceptors. D2 is needed for assembly of a stable PSII complex. The polypeptide is Photosystem II D2 protein (Populus trichocarpa (Western balsam poplar)).